The primary structure comprises 381 residues: Protein-glutamate methylesterase/protein-glutamine glutaminase (381 aa).

In terms of domain architecture, Response regulatory spans 20-138 (RVMVVDDSVV…EIAAADIFKH (119 aa)). Asp-71 is subject to 4-aspartylphosphate. Residues 154 to 176 (PAALASAREPEPRPIQATPVPAH) are disordered. The region spanning 183–373 (PFSTHAPRAL…PLQQIAPKLV (191 aa)) is the CheB-type methylesterase domain. Residues Ser-197, His-225, and Asp-321 contribute to the active site.

The protein belongs to the CheB family. Post-translationally, phosphorylated by CheA. Phosphorylation of the N-terminal regulatory domain activates the methylesterase activity.

The protein resides in the cytoplasm. The enzyme catalyses [protein]-L-glutamate 5-O-methyl ester + H2O = L-glutamyl-[protein] + methanol + H(+). It carries out the reaction L-glutaminyl-[protein] + H2O = L-glutamyl-[protein] + NH4(+). Involved in chemotaxis. Part of a chemotaxis signal transduction system that modulates chemotaxis in response to various stimuli. Catalyzes the demethylation of specific methylglutamate residues introduced into the chemoreceptors (methyl-accepting chemotaxis proteins or MCP) by CheR. Also mediates the irreversible deamidation of specific glutamine residues to glutamic acid. This Nitrobacter hamburgensis (strain DSM 10229 / NCIMB 13809 / X14) protein is Protein-glutamate methylesterase/protein-glutamine glutaminase.